A 541-amino-acid polypeptide reads, in one-letter code: MKIRFCNGFTKPGFLLVHFEPPSFFAVRSRSLSDSTYGNLCNHKKRPGTGIGLTVQCAIANRRFSSRSLDSPRRERSSRSSSSSGRDRDRDKDKGRDSKSLYSRPSLLDMNKEKAANRAKVYEFLRGIGIVPDELDGLELPVTADVMKERVEFLHKLGLTIEDINNYPLVLGCSVKKNMVPVLDYLGKLGVRKSTFTEFLRRYPQVLHSSVVIDLAPVVKYLQGLDIKPSDVPRVLERYPEVLGFKLEGTMSTSVAYLVGIGVARREIGGILTRYPEILGMRVARIIKPLVEYLEVLGIPRLAAARLIEKRPHILGFELDDTVKPNVQILQDFNVRETSLPSIIAQYPEIIGIDLKPKLDTQRKLLCSAIHLNPEDLGSLIERMPQFVSLSESPMLKHIDFLTKCGFSIDQTREMVIGCPQVLALNLGIMKLSFEYFQKEMKRPLQDLVDFPAFFTYGLESTVKPRHKKIIKKGIKCSLAWMLNCSDEKFEQRMSYDTIDIEEVETDPSSFDMNTLMQPEREEESDSEYEEEEDDDDEEFA.

The transit peptide at 1-45 (MKIRFCNGFTKPGFLLVHFEPPSFFAVRSRSLSDSTYGNLCNHKK) directs the protein to the chloroplast. Disordered stretches follow at residues 66–103 (SRSLDSPRRERSSRSSSSSGRDRDRDKDKGRDSKSLYS) and 503–541 (EVETDPSSFDMNTLMQPEREEESDSEYEEEEDDDDEEFA). The segment covering 85 to 99 (GRDRDRDKDKGRDSK) has biased composition (basic and acidic residues). Positions 507 to 517 (DPSSFDMNTLM) are enriched in polar residues. Residues 521-541 (REEESDSEYEEEEDDDDEEFA) are compositionally biased toward acidic residues.

Belongs to the mTERF family.

Its subcellular location is the plastid. It is found in the chloroplast. The protein localises to the mitochondrion. Transcription termination factor required for processing and steady-state levels of plastid transcripts. Required for splicing of the chloroplastic Clp protease (ClpP) group IIa intron. Required for maturation of 16S rRNA and 23S rRNA in the chloroplast. Essential for embryogenesis. Required for the maintenance of the correct levels of transcripts in the mitochondria and chloroplasts. In Arabidopsis thaliana (Mouse-ear cress), this protein is Transcription termination factor MTERF4, chloroplastic.